The sequence spans 263 residues: Probable adenylate kinase 7, mitochondrial (263 aa).

Residues 1–30 (MAWLSRVRGVSPVTRLAAIRRSFGSAAALE) constitute a mitochondrion transit peptide. 72–77 (GAWRHV) is a binding site for ATP. An NMP region spans residues 92–121 (SMGSLVRQELNPRSSLYKEIASAVNERKLV). AMP-binding positions include Arg98, 119-121 (KLV), 149-152 (GIPR), Gln156, and Arg206. Gly234 contributes to the ATP binding site.

The protein belongs to the adenylate kinase family. As to quaternary structure, monomer.

It is found in the mitochondrion. It catalyses the reaction AMP + ATP = 2 ADP. Functionally, catalyzes the reversible transfer of the terminal phosphate group between ATP and AMP. Plays an important role in cellular energy homeostasis and in adenine nucleotide metabolism. In Arabidopsis thaliana (Mouse-ear cress), this protein is Probable adenylate kinase 7, mitochondrial.